The following is a 175-amino-acid chain: Adenylate kinase isoenzyme 6 homolog (175 aa).

ATP-binding residues include glycine 18, glycine 20, lysine 21, threonine 22, and threonine 23. Residues 38 to 61 form an NMPbind region; sequence CIGDVVKENHLHFGFDEKWKTYDV. Residues 113-123 form an LID region; the sequence is SRGYSLEKIQE. Residue arginine 114 participates in ATP binding.

It belongs to the adenylate kinase family. AK6 subfamily. In terms of assembly, interacts with small ribosomal subunit protein uS11. Not a structural component of 43S pre-ribosomes, but transiently interacts with them by binding to uS11.

The protein resides in the cytoplasm. It localises to the nucleus. It carries out the reaction AMP + ATP = 2 ADP. It catalyses the reaction ATP + H2O = ADP + phosphate + H(+). Broad-specificity nucleoside monophosphate (NMP) kinase that catalyzes the reversible transfer of the terminal phosphate group between nucleoside triphosphates and monophosphates. Also has ATPase activity. Involved in the late cytoplasmic maturation steps of the 40S ribosomal particles, specifically 18S rRNA maturation. While NMP activity is not required for ribosome maturation, ATPase activity is. Associates transiently with small ribosomal subunit protein uS11. ATP hydrolysis breaks the interaction with uS11. May temporarily remove uS11 from the ribosome to enable a conformational change of the ribosomal RNA that is needed for the final maturation step of the small ribosomal subunit. Its NMP activity may have a role in nuclear energy homeostasis. The protein is Adenylate kinase isoenzyme 6 homolog (fap7) of Schizosaccharomyces pombe (strain 972 / ATCC 24843) (Fission yeast).